We begin with the raw amino-acid sequence, 234 residues long: MKDQKVIVALDYDNQADALTFVDKIDPSSCRLKVGKEMFTLFGPEFVKELHKRGFSVFLDLKFHDIPNTCSKAVRAAAEMGVWMVNVHASGGERMMSASREILEPYGSDRPLLIGVTVLTSMEQQDLAGIGLDIAPQEQVKRLAALTKNSGLDGVVCSAQEASMLKADLGKEFQLVTPGIRPAGADVGDQKRIMTPVDAITAGSDYLVIGRPITQAENPSQVLNEINLSLASVL.

Residues aspartate 11, lysine 33, aspartate 60–threonine 69, threonine 120, arginine 181, glutamine 190, glycine 210, and arginine 211 each bind substrate. The active-site Proton donor is lysine 62.

Belongs to the OMP decarboxylase family. Type 1 subfamily. As to quaternary structure, homodimer.

It carries out the reaction orotidine 5'-phosphate + H(+) = UMP + CO2. It functions in the pathway pyrimidine metabolism; UMP biosynthesis via de novo pathway; UMP from orotate: step 2/2. Catalyzes the decarboxylation of orotidine 5'-monophosphate (OMP) to uridine 5'-monophosphate (UMP). The chain is Orotidine 5'-phosphate decarboxylase from Aliivibrio fischeri (strain ATCC 700601 / ES114) (Vibrio fischeri).